The chain runs to 256 residues: Ribosomal RNA large subunit methyltransferase E (256 aa).

Positions 48, 50, 68, 86, and 111 each coordinate S-adenosyl-L-methionine. The Proton acceptor role is filled by Lys-151. The region spanning 198-256 (PVSPGDELDATVVDIGSEGDGIIKIDGYTLFVPGVENGDSVRVRVTDLKSNVGFAEVIE) is the TRAM domain.

The protein belongs to the class I-like SAM-binding methyltransferase superfamily. RNA methyltransferase RlmE family.

It is found in the cytoplasm. It catalyses the reaction uridine(2552) in 23S rRNA + S-adenosyl-L-methionine = 2'-O-methyluridine(2552) in 23S rRNA + S-adenosyl-L-homocysteine + H(+). In terms of biological role, specifically methylates the uridine in position 2552 of 23S rRNA at the 2'-O position of the ribose in the fully assembled 50S ribosomal subunit. The protein is Ribosomal RNA large subunit methyltransferase E of Haloquadratum walsbyi (strain DSM 16790 / HBSQ001).